The sequence spans 375 residues: Succinyl-diaminopimelate desuccinylase (375 aa).

Histidine 66 contributes to the Zn(2+) binding site. Aspartate 68 is an active-site residue. Position 99 (aspartate 99) interacts with Zn(2+). Glutamate 133 acts as the Proton acceptor in catalysis. Residues glutamate 134, glutamate 162, and histidine 348 each coordinate Zn(2+).

This sequence belongs to the peptidase M20A family. DapE subfamily. In terms of assembly, homodimer. Zn(2+) is required as a cofactor. Co(2+) serves as cofactor.

The catalysed reaction is N-succinyl-(2S,6S)-2,6-diaminopimelate + H2O = (2S,6S)-2,6-diaminopimelate + succinate. It functions in the pathway amino-acid biosynthesis; L-lysine biosynthesis via DAP pathway; LL-2,6-diaminopimelate from (S)-tetrahydrodipicolinate (succinylase route): step 3/3. Catalyzes the hydrolysis of N-succinyl-L,L-diaminopimelic acid (SDAP), forming succinate and LL-2,6-diaminopimelate (DAP), an intermediate involved in the bacterial biosynthesis of lysine and meso-diaminopimelic acid, an essential component of bacterial cell walls. This is Succinyl-diaminopimelate desuccinylase from Escherichia coli O139:H28 (strain E24377A / ETEC).